Consider the following 172-residue polypeptide: Stellate protein CG33238 (172 aa).

Belongs to the casein kinase 2 subunit beta family. In terms of assembly, interacts in vitro with the casein kinase 2 alpha subunit (CkII-alpha). The relevance of such interaction is however unclear in vivo. In terms of tissue distribution, probably not expressed in wild-type flies. In males lacking the Y chromosome, it is testis-specific and constitutes the main component of star-shaped crystals.

Unknown. In males lacking the Y chromosome, its strong overexpression leads to the appearance of proteinaceous star-shaped crystals in the primary spermatocytes causing meiotic drive, possibly by interfering with normal casein kinase 2 activity. This chain is Stellate protein CG33238 (Ste:CG33238), found in Drosophila melanogaster (Fruit fly).